The sequence spans 309 residues: Homoserine kinase (309 aa).

95–105 is a binding site for ATP; sequence PQSRGLGSSAA.

Belongs to the GHMP kinase family. Homoserine kinase subfamily.

The protein localises to the cytoplasm. It catalyses the reaction L-homoserine + ATP = O-phospho-L-homoserine + ADP + H(+). Its pathway is amino-acid biosynthesis; L-threonine biosynthesis; L-threonine from L-aspartate: step 4/5. In terms of biological role, catalyzes the ATP-dependent phosphorylation of L-homoserine to L-homoserine phosphate. This Corynebacterium glutamicum (strain R) protein is Homoserine kinase.